Consider the following 276-residue polypeptide: Probable endonuclease 4 (276 aa).

The Zn(2+) site is built by His-70, His-108, Glu-143, Asp-176, His-179, His-210, Asp-223, His-225, and Glu-255.

Belongs to the AP endonuclease 2 family. Requires Zn(2+) as cofactor.

The catalysed reaction is Endonucleolytic cleavage to 5'-phosphooligonucleotide end-products.. In terms of biological role, endonuclease IV plays a role in DNA repair. It cleaves phosphodiester bonds at apurinic or apyrimidinic (AP) sites, generating a 3'-hydroxyl group and a 5'-terminal sugar phosphate. The polypeptide is Probable endonuclease 4 (Mesomycoplasma hyopneumoniae (strain 7448) (Mycoplasma hyopneumoniae)).